We begin with the raw amino-acid sequence, 323 residues long: Chitin-binding lectin 1 (323 aa).

The first 22 residues, 1–22 (MKETAISVLALLTLFLLEVVSA), serve as a signal peptide directing secretion. Proline 50, proline 51, proline 53, and proline 55 each carry 4-hydroxyproline. 4 O-linked (Ara...) hydroxyproline glycosylation sites follow: proline 50, proline 51, proline 53, and proline 55. 2 Chitin-binding type-1 domains span residues 58 to 101 (YPQC…QCPG) and 105 to 149 (EGRC…QCKL). Disulfide bonds link cysteine 61–cysteine 77, cysteine 70–cysteine 83, cysteine 76–cysteine 90, cysteine 95–cysteine 99, cysteine 108–cysteine 125, cysteine 117–cysteine 131, cysteine 124–cysteine 138, and cysteine 143–cysteine 147. The chitin site is built by serine 78, tryptophan 80, tryptophan 82, and tyrosine 89. The interval 150 to 210 (PSPPPPPPPP…PPPPPPALPY (61 aa)) is extensin-like. An O-linked (Gal) serine glycan is attached at serine 151. 10 repeat units span residues 151-159 (SPPPPPPPP), 160-164 (SPPPP), 165-167 (SPP), 168-172 (SPPPP), 173-180 (SPPPPPPP), 181-185 (SPPPP), 186-190 (SPPPP), 191-192 (SP), 193-198 (SPPPPP), and 200-206 (SPPPPPP). Residues 151–206 (SPPPPPPPPSPPPPSPPSPPPPSPPPPPPPSPPPPSPPPPSPSPPPPPASPPPPPP) form a 10 X approximate repeats of S-P-P-P-P region. 4-hydroxyproline is present on residues proline 152, proline 153, proline 154, proline 155, proline 156, proline 157, proline 158, and proline 159. Residues proline 152, proline 153, proline 154, proline 155, proline 156, proline 157, proline 158, and proline 159 are each glycosylated (O-linked (Ara...) hydroxyproline). The interval 154 to 203 (PPPPPPSPPPPSPPSPPPPSPPPPPPPSPPPPSPPPPSPSPPPPPASPPP) is disordered. Serine 160 carries an O-linked (Gal) serine glycan. 4-hydroxyproline is present on residues proline 161, proline 162, proline 163, and proline 164. Residues proline 161, proline 162, proline 163, and proline 164 are each glycosylated (O-linked (Ara...) hydroxyproline). A glycan (O-linked (Gal) serine) is linked at serine 165. 4-hydroxyproline occurs at positions 166 and 167. O-linked (Ara...) hydroxyproline glycans are attached at residues proline 166 and proline 167. Serine 168 carries an O-linked (Gal) serine glycan. A 4-hydroxyproline mark is found at proline 169, proline 170, proline 171, and proline 172. Proline 169, proline 170, proline 171, and proline 172 each carry an O-linked (Ara...) hydroxyproline glycan. An O-linked (Gal) serine glycan is attached at serine 173. 4-hydroxyproline is present on residues proline 174, proline 175, proline 176, proline 177, proline 178, proline 179, and proline 180. O-linked (Ara...) hydroxyproline glycans are attached at residues proline 174, proline 175, proline 176, proline 177, proline 178, proline 179, and proline 180. The O-linked (Gal) serine glycan is linked to serine 181. Proline 182, proline 183, proline 184, and proline 185 each carry 4-hydroxyproline. O-linked (Ara...) hydroxyproline glycans are attached at residues proline 182, proline 183, proline 184, and proline 185. O-linked (Gal) serine glycosylation is present at serine 186. 4-hydroxyproline is present on residues proline 187, proline 188, proline 189, and proline 190. O-linked (Ara...) hydroxyproline glycans are attached at residues proline 187, proline 188, proline 189, and proline 190. O-linked (Gal) serine glycosylation is present at serine 191. Proline 192 carries the post-translational modification 4-hydroxyproline. Residue proline 192 is glycosylated (O-linked (Ara...) hydroxyproline). The O-linked (Gal) serine glycan is linked to serine 193. 5 positions are modified to 4-hydroxyproline: proline 194, proline 195, proline 196, proline 197, and proline 198. Residues proline 194, proline 195, proline 196, proline 197, and proline 198 are each glycosylated (O-linked (Ara...) hydroxyproline). O-linked (Gal) serine glycosylation occurs at serine 200. 7 positions are modified to 4-hydroxyproline: proline 201, proline 202, proline 203, proline 204, proline 205, proline 206, and proline 209. O-linked (Ara...) hydroxyproline glycans are attached at residues proline 201, proline 202, proline 203, proline 204, proline 205, proline 206, and proline 209. Chitin-binding type-1 domains follow at residues 210 to 253 (YPQC…QCPG) and 257 to 301 (EGRC…QCNT). Cystine bridges form between cysteine 213–cysteine 229, cysteine 222–cysteine 235, cysteine 228–cysteine 242, cysteine 247–cysteine 251, cysteine 260–cysteine 277, cysteine 269–cysteine 283, cysteine 276–cysteine 290, and cysteine 295–cysteine 299. Chitin contacts are provided by serine 230, tryptophan 232, tryptophan 234, and tyrosine 241.

The protein in the central section; belongs to the extensin family. In terms of assembly, homodimer. Heavily glycosylated with beta-arabinose on hydroxyprolines and with alpha-galactose on serines of the extensin-like domain. As no other sugars could be detected in the native lectin, it is unlikely that the three putative N-glycosylation sites are actually glycosylated. In terms of processing, the N-terminus is blocked. The N-terminal sequences proposed in PubMed:9022287 and PubMed:11056399 originate probably from truncated proteins.

Its function is as follows. This protein might function as a defense against chitin containing pathogens. Binds to several branched or linear N-acetyllactosamine-containing glycosphingolipids and also to lactosylceramide with sphingosine and non-hydroxy fatty acids. The protein is Chitin-binding lectin 1 of Solanum tuberosum (Potato).